The primary structure comprises 508 residues: CUGBP Elav-like family member 2 (508 aa).

Necessary for RNA-binding, TNNT2 exon 5 and NMDA R1 exon 21 inclusion stretches follow at residues 1–283 (MRCP…LQNL) and 357–508 (LAGM…SKPY). 3 consecutive RRM domains span residues 40 to 123 (IKMF…PADS), 132 to 212 (RKLF…FADT), and 423 to 501 (ANLF…LKRS).

Belongs to the CELF/BRUNOL family. Interacts with A1CF. Expressed in frontal cortex. Isoform 1 is expressed in brain and lung. Isoform 2 is expressed in heart, brain, placenta, lung, liver, kidney, skeletal muscle and pancreas. Isoform 4 is expressed in heart, lung, skeletal muscle, kidney and pancreas.

The protein resides in the nucleus. The protein localises to the cytoplasm. Its function is as follows. RNA-binding protein implicated in the regulation of several post-transcriptional events. Involved in pre-mRNA alternative splicing, mRNA translation and stability. Mediates exon inclusion and/or exclusion in pre-mRNA that are subject to tissue-specific and developmentally regulated alternative splicing. Specifically activates exon 5 inclusion of TNNT2 in embryonic, but not adult, skeletal muscle. Activates TNNT2 exon 5 inclusion by antagonizing the repressive effect of PTB. Acts both as an activator and as a repressor of a pair of coregulated exons: promotes inclusion of the smooth muscle (SM) exon but exclusion of the non-muscle (NM) exon in actinin pre-mRNAs. Promotes inclusion of exonS 21 and exclusion of exon 5 of the NMDA receptor R1 pre-mRNA. Involved in the apoB RNA editing activity. Increases COX2 mRNA stability and inhibits COX2 mRNA translation in epithelial cells after radiation injury. Modulates the cellular apoptosis program by regulating COX2-mediated prostaglandin E2 (PGE2) expression. Binds to (CUG)n triplet repeats in the 3'-UTR of transcripts such as DMPK. Binds to the muscle-specific splicing enhancer (MSE) intronic sites flanking the TNNT2 alternative exon 5. Binds preferentially to UG-rich sequences, in particular UG repeat and UGUU motifs. Binds to apoB mRNA, specifically to AU-rich sequences located immediately upstream of the edited cytidine. Binds AU-rich sequences in the 3'-UTR of COX2 mRNA. Binds to an intronic RNA element responsible for the silencing of exon 21 splicing. Binds to (CUG)n repeats. May be a specific regulator of miRNA biogenesis. Binds to primary microRNA pri-MIR140 and, with CELF1, negatively regulates the processing to mature miRNA. This chain is CUGBP Elav-like family member 2 (CELF2), found in Homo sapiens (Human).